A 1276-amino-acid chain; its full sequence is Probable outer membrane protein pmp6 (1276 aa).

A signal peptide spans 1–23; sequence MKYSLPWLLTSSALVFSLHPLMA. The Autotransporter domain maps to 981 to 1276; the sequence is DAPSHPGIWI…NANCGTRYSF (296 aa).

This sequence belongs to the PMP outer membrane protein family.

The protein localises to the secreted. The protein resides in the cell wall. It localises to the cell outer membrane. The sequence is that of Probable outer membrane protein pmp6 (pmp6) from Chlamydia pneumoniae (Chlamydophila pneumoniae).